Reading from the N-terminus, the 514-residue chain is Maturase K (514 aa).

The protein belongs to the intron maturase 2 family. MatK subfamily.

It is found in the plastid. The protein localises to the chloroplast. Functionally, usually encoded in the trnK tRNA gene intron. Probably assists in splicing its own and other chloroplast group II introns. This Erythronium grandiflorum (Yellow avalanche-lily) protein is Maturase K.